The sequence spans 852 residues: Lon protease homolog 2, peroxisomal (852 aa).

Residue serine 2 is modified to N-acetylserine. The 210-residue stretch at 13–222 (LPLLLTHEGV…MTIPLLVRQI (210 aa)) folds into the Lon N-terminal domain. Residue 375 to 382 (GPPGVGKT) coordinates ATP. The Lon proteolytic domain occupies 651 to 837 (LSQPGVAIGL…DEVLNAAFDG (187 aa)). Residues serine 743 and lysine 786 contribute to the active site. The Microbody targeting signal motif lies at 850 to 852 (SKL).

This sequence belongs to the peptidase S16 family. As to quaternary structure, interacts with PEX5. Interacts with TYSND1. May interact with enzymes involved in beta-oxidation of fatty acids, including ACOX1/AOX.

It is found in the peroxisome matrix. It carries out the reaction Hydrolysis of proteins in presence of ATP.. Functionally, ATP-dependent serine protease that mediates the selective degradation of misfolded and unassembled polypeptides in the peroxisomal matrix. Necessary for type 2 peroxisome targeting signal (PTS2)-containing protein processing and facilitates peroxisome matrix protein import. May indirectly regulate peroxisomal fatty acid beta-oxidation through degradation of the self-processed forms of TYSND1. This Pongo abelii (Sumatran orangutan) protein is Lon protease homolog 2, peroxisomal.